The primary structure comprises 404 residues: Argininosuccinate synthase (404 aa).

Position 9–17 (9–17) interacts with ATP; the sequence is AYSGGLDTS. Tyr-86 is an L-citrulline binding site. Gly-116 lines the ATP pocket. L-aspartate contacts are provided by Thr-118, Asn-122, and Asp-123. Asn-122 provides a ligand contact to L-citrulline. L-citrulline is bound by residues Arg-126, Ser-174, Ser-183, Glu-259, and Tyr-271.

It belongs to the argininosuccinate synthase family. Type 1 subfamily. In terms of assembly, homotetramer.

Its subcellular location is the cytoplasm. The enzyme catalyses L-citrulline + L-aspartate + ATP = 2-(N(omega)-L-arginino)succinate + AMP + diphosphate + H(+). Its pathway is amino-acid biosynthesis; L-arginine biosynthesis; L-arginine from L-ornithine and carbamoyl phosphate: step 2/3. This is Argininosuccinate synthase from Listeria monocytogenes serovar 1/2a (strain ATCC BAA-679 / EGD-e).